The chain runs to 326 residues: Fructose-1,6-bisphosphatase class 1 (326 aa).

It belongs to the FBPase class 1 family. In terms of assembly, homotetramer.

Its subcellular location is the cytoplasm. The enzyme catalyses beta-D-fructose 1,6-bisphosphate + H2O = beta-D-fructose 6-phosphate + phosphate. The protein operates within carbohydrate biosynthesis; gluconeogenesis. The polypeptide is Fructose-1,6-bisphosphatase class 1 (Methylobacterium sp. (strain 4-46)).